The following is a 71-amino-acid chain: Large ribosomal subunit protein bL32c (71 aa).

Positions 1-24 are disordered; sequence MAVPKKRTSRSKKKIRKNVRKGKK.

The protein belongs to the bacterial ribosomal protein bL32 family.

The protein resides in the plastid. It localises to the chloroplast. In Pinus koraiensis (Korean pine), this protein is Large ribosomal subunit protein bL32c.